Here is a 1165-residue protein sequence, read N- to C-terminus: Autophagy-related protein 11 (1165 aa).

2 coiled-coil regions span residues 239–304 (NKLN…YKNM) and 670–853 (DNIR…KQKK).

Belongs to the ATG11 family. As to quaternary structure, homodimer and potential homooligomers.

The protein localises to the preautophagosomal structure membrane. In terms of biological role, plays an essential role in both non-selective and selective autophagy such as mitophagy. Recruits mitochondria for their selective degradation via autophagy (mitophagy) during starvation, through its interaction with ATG32. Works as scaffold proteins that recruit ATG proteins to the pre-autophagosome (PAS), the site of vesicle/autophagosome formation. Required for ATG9 anterograde transport from the mitochondria to the PAS. This is Autophagy-related protein 11 from Candida albicans (strain SC5314 / ATCC MYA-2876) (Yeast).